Reading from the N-terminus, the 228-residue chain is Ribosomal RNA small subunit methyltransferase G (228 aa).

S-adenosyl-L-methionine contacts are provided by residues Gly-92, Phe-97, 115 to 117 (EAT), 143 to 144 (AE), and Arg-156.

Belongs to the methyltransferase superfamily. RNA methyltransferase RsmG family.

It localises to the cytoplasm. Its function is as follows. Specifically methylates the N7 position of a guanine in 16S rRNA. The chain is Ribosomal RNA small subunit methyltransferase G from Thermosynechococcus vestitus (strain NIES-2133 / IAM M-273 / BP-1).